The chain runs to 234 residues: LexA repressor (234 aa).

The H-T-H motif DNA-binding region spans 41–61; the sequence is RAEIAAELGFRSPNAAEEHLK. Active-site for autocatalytic cleavage activity residues include serine 152 and lysine 189.

The protein belongs to the peptidase S24 family. As to quaternary structure, homodimer.

The catalysed reaction is Hydrolysis of Ala-|-Gly bond in repressor LexA.. In terms of biological role, represses a number of genes involved in the response to DNA damage (SOS response), including recA and lexA. In the presence of single-stranded DNA, RecA interacts with LexA causing an autocatalytic cleavage which disrupts the DNA-binding part of LexA, leading to derepression of the SOS regulon and eventually DNA repair. The chain is LexA repressor from Polaromonas naphthalenivorans (strain CJ2).